Reading from the N-terminus, the 72-residue chain is Penaeidin-2d (72 aa).

An N-terminal signal peptide occupies residues 1-21 (MRLVVCLVFLASFALVCQGGA). Residue Gln22 is modified to Pyrrolidone carboxylic acid. Disulfide bonds link Cys45–Cys59, Cys48–Cys66, and Cys60–Cys67. Lys71 is modified (lysine amide).

The protein belongs to the penaeidin family.

The protein localises to the cytoplasmic granule. In terms of biological role, antibacterial and antifungal activity. Presents chitin-binding activity. The chain is Penaeidin-2d from Penaeus setiferus (Atlantic white shrimp).